Here is a 147-residue protein sequence, read N- to C-terminus: Cyanate hydratase (147 aa).

Catalysis depends on residues Arg88, Glu91, and Ser114.

It belongs to the cyanase family.

The enzyme catalyses cyanate + hydrogencarbonate + 3 H(+) = NH4(+) + 2 CO2. Functionally, catalyzes the reaction of cyanate with bicarbonate to produce ammonia and carbon dioxide. This is Cyanate hydratase from Acaryochloris marina (strain MBIC 11017).